A 283-amino-acid chain; its full sequence is uncharacterized protein (283 aa).

This is an uncharacterized protein from Streptomyces coelicolor (strain ATCC BAA-471 / A3(2) / M145).